The sequence spans 130 residues: Prefoldin subunit alpha (130 aa).

It belongs to the prefoldin subunit alpha family. As to quaternary structure, heterohexamer of two alpha and four beta subunits.

It localises to the cytoplasm. Molecular chaperone capable of stabilizing a range of proteins. Seems to fulfill an ATP-independent, HSP70-like function in archaeal de novo protein folding. The chain is Prefoldin subunit alpha (pfdA) from Thermoplasma acidophilum (strain ATCC 25905 / DSM 1728 / JCM 9062 / NBRC 15155 / AMRC-C165).